The primary structure comprises 468 residues: ATP synthase subunit beta (468 aa).

An ATP-binding site is contributed by Gly-155 to Thr-162.

This sequence belongs to the ATPase alpha/beta chains family. In terms of assembly, F-type ATPases have 2 components, CF(1) - the catalytic core - and CF(0) - the membrane proton channel. CF(1) has five subunits: alpha(3), beta(3), gamma(1), delta(1), epsilon(1). CF(0) has three main subunits: a(1), b(2) and c(9-12). The alpha and beta chains form an alternating ring which encloses part of the gamma chain. CF(1) is attached to CF(0) by a central stalk formed by the gamma and epsilon chains, while a peripheral stalk is formed by the delta and b chains.

The protein localises to the cell membrane. It catalyses the reaction ATP + H2O + 4 H(+)(in) = ADP + phosphate + 5 H(+)(out). Its function is as follows. Produces ATP from ADP in the presence of a proton gradient across the membrane. The catalytic sites are hosted primarily by the beta subunits. The protein is ATP synthase subunit beta of Streptococcus uberis (strain ATCC BAA-854 / 0140J).